We begin with the raw amino-acid sequence, 1039 residues long: Antigen 43 (1039 aa).

The first 52 residues, 1-52, serve as a signal peptide directing secretion; that stretch reads MKRHLNTCYRLVWNHMTGAFVVASELARARGKRGGVAVALSLAAVTSLPVLA. The 303-residue stretch at 737–1039 folds into the Autotransporter domain; it reads VNGENNSVRL…NGQATLNVTF (303 aa).

Interaction with TamA of the translocation and assembly module (TAM) initiates insertion in the outer membrane.

The protein resides in the periplasm. The protein localises to the secreted. It localises to the cell surface. It is found in the cell outer membrane. Functionally, controls colony form variation and autoaggregation. May function as an adhesin. The polypeptide is Antigen 43 (flu) (Escherichia coli (strain K12)).